Reading from the N-terminus, the 360-residue chain is Peptide chain release factor 1 (360 aa).

Gln-237 is subject to N5-methylglutamine.

It belongs to the prokaryotic/mitochondrial release factor family. Post-translationally, methylated by PrmC. Methylation increases the termination efficiency of RF1.

It localises to the cytoplasm. Peptide chain release factor 1 directs the termination of translation in response to the peptide chain termination codons UAG and UAA. The polypeptide is Peptide chain release factor 1 (Pseudomonas fluorescens (strain ATCC BAA-477 / NRRL B-23932 / Pf-5)).